We begin with the raw amino-acid sequence, 479 residues long: Serine carboxypeptidase-like 44 (479 aa).

A signal peptide spans 1-22 (MVGGKWRFLEVAVVVMVLQWSC). Disulfide bonds link Cys92-Cys352, Cys253-Cys270, and Cys295-Cys320. An N-linked (GlcNAc...) asparagine glycan is attached at Asn143. The active site involves Ser184. Asn265 carries an N-linked (GlcNAc...) asparagine glycan. Asn341 is a glycosylation site (N-linked (GlcNAc...) asparagine). The active site involves Asp389. An N-linked (GlcNAc...) asparagine glycan is attached at Asn411. The active site involves His446.

This sequence belongs to the peptidase S10 family. As to expression, expressed in seedlings.

It is found in the secreted. In terms of biological role, probable carboxypeptidase. The sequence is that of Serine carboxypeptidase-like 44 (SCPL44) from Arabidopsis thaliana (Mouse-ear cress).